Consider the following 291-residue polypeptide: uncharacterized protein (291 aa).

Positions 1–58 (MDLKWLQTFIAAAESESFREAAEHLYLTQPAVSQHMRKLEDELDMRLFLHSGRRVVLT) constitute an HTH lysR-type domain. The segment at residues 18 to 37 (FREAAEHLYLTQPAVSQHMR) is a DNA-binding region (H-T-H motif).

Belongs to the LysR transcriptional regulatory family.

This is an uncharacterized protein from Bacillus subtilis (strain 168).